Here is a 482-residue protein sequence, read N- to C-terminus: tRNA modification GTPase MnmE (482 aa).

(6S)-5-formyl-5,6,7,8-tetrahydrofolate is bound by residues Arg-25, Glu-82, and Lys-135. In terms of domain architecture, TrmE-type G spans 231 to 404; that stretch reads GIKVVIAGQP…LRRVLLDIAG (174 aa). Residue Asn-241 participates in K(+) binding. GTP is bound by residues 241-246, 260-266, 285-288, and 385-387; these read NAGKSS, TPIAGTT, DTAG, and SAR. Ser-245 contacts Mg(2+). Residues Thr-260, Ile-262, and Thr-265 each coordinate K(+). Thr-266 lines the Mg(2+) pocket. Residue Lys-482 coordinates (6S)-5-formyl-5,6,7,8-tetrahydrofolate.

This sequence belongs to the TRAFAC class TrmE-Era-EngA-EngB-Septin-like GTPase superfamily. TrmE GTPase family. In terms of assembly, homodimer. Heterotetramer of two MnmE and two MnmG subunits. It depends on K(+) as a cofactor.

Its subcellular location is the cytoplasm. Functionally, exhibits a very high intrinsic GTPase hydrolysis rate. Involved in the addition of a carboxymethylaminomethyl (cmnm) group at the wobble position (U34) of certain tRNAs, forming tRNA-cmnm(5)s(2)U34. This is tRNA modification GTPase MnmE from Paracidovorax citrulli (strain AAC00-1) (Acidovorax citrulli).